A 289-amino-acid chain; its full sequence is Diaminopimelate epimerase (289 aa).

Substrate-binding residues include N13, Q52, and N72. The Proton donor role is filled by C81. Substrate contacts are provided by residues 82–83, N167, N201, and 219–220; these read GN and ER. Catalysis depends on C228, which acts as the Proton acceptor. Substrate is bound at residue 229-230; that stretch reads GT.

This sequence belongs to the diaminopimelate epimerase family. As to quaternary structure, homodimer.

The protein localises to the cytoplasm. The catalysed reaction is (2S,6S)-2,6-diaminopimelate = meso-2,6-diaminopimelate. It functions in the pathway amino-acid biosynthesis; L-lysine biosynthesis via DAP pathway; DL-2,6-diaminopimelate from LL-2,6-diaminopimelate: step 1/1. Its function is as follows. Catalyzes the stereoinversion of LL-2,6-diaminopimelate (L,L-DAP) to meso-diaminopimelate (meso-DAP), a precursor of L-lysine and an essential component of the bacterial peptidoglycan. This is Diaminopimelate epimerase from Caulobacter sp. (strain K31).